A 280-amino-acid chain; its full sequence is Four and a half LIM domains protein 1 (280 aa).

An N-acetylserine modification is found at Ser-2. Lys-4 carries the N6-acetyllysine modification. The segment at 7–31 adopts a C4-type zinc-finger fold; that stretch reads CHYCRDPLQGKKYVQKDGRHCCLKC. LIM zinc-binding domains lie at 40-92, 101-153, 162-212, and 221-276; these read CVEC…CNKC, CKGC…CVTC, CVKC…CVDC, and CAGC…CPDC. A Glycyl lysine isopeptide (Lys-Gly) (interchain with G-Cter in SUMO2) cross-link involves residue Lys-86.

It localises to the cytoplasm. Functionally, may have an involvement in muscle development or hypertrophy. Isoform 2 binds to RBP-J and plays a negative regulatory role in the RBP-J-mediated transcription in mammalian systems. This Rattus norvegicus (Rat) protein is Four and a half LIM domains protein 1 (Fhl1).